The chain runs to 276 residues: NH(3)-dependent NAD(+) synthetase (276 aa).

Position 43–50 (43–50) interacts with ATP; sequence GISGGVDS. D49 is a binding site for Mg(2+). R146 serves as a coordination point for deamido-NAD(+). T166 provides a ligand contact to ATP. E171 contributes to the Mg(2+) binding site. Deamido-NAD(+)-binding residues include K179 and D186. Positions 195 and 217 each coordinate ATP. 266–267 is a deamido-NAD(+) binding site; it reads HK.

It belongs to the NAD synthetase family. In terms of assembly, homodimer.

It catalyses the reaction deamido-NAD(+) + NH4(+) + ATP = AMP + diphosphate + NAD(+) + H(+). It functions in the pathway cofactor biosynthesis; NAD(+) biosynthesis; NAD(+) from deamido-NAD(+) (ammonia route): step 1/1. Functionally, catalyzes the ATP-dependent amidation of deamido-NAD to form NAD. Uses ammonia as a nitrogen source. The sequence is that of NH(3)-dependent NAD(+) synthetase from Shewanella amazonensis (strain ATCC BAA-1098 / SB2B).